The chain runs to 31 residues: Conotoxin (31 aa).

It belongs to the conotoxin S superfamily. Post-translationally, contains 5 disulfide bonds. Expressed by the venom duct.

It localises to the secreted. In Conus striatus (Striated cone), this protein is Conotoxin.